We begin with the raw amino-acid sequence, 569 residues long: uncharacterized protein (569 aa).

The N-terminal stretch at 1–21 (MLCVMMLLFSAIASFPVSAQA) is a signal peptide. At 22 to 530 (KDQDAGILII…DHHRQTPLEK (509 aa)) the chain is on the extracellular side. Residues 531-551 (ALWILSAVVLLFVIMFVSYTF) traverse the membrane as a helical segment. At 552 to 569 (YLRATLKKRIFKERRSLG) the chain is on the cytoplasmic side.

The protein resides in the cell membrane. This is an uncharacterized protein from Bacillus subtilis (strain 168).